A 353-amino-acid polypeptide reads, in one-letter code: Protein RecA (353 aa).

68–75 (GPESSGKT) contributes to the ATP binding site.

This sequence belongs to the RecA family.

It is found in the cytoplasm. Its function is as follows. Can catalyze the hydrolysis of ATP in the presence of single-stranded DNA, the ATP-dependent uptake of single-stranded DNA by duplex DNA, and the ATP-dependent hybridization of homologous single-stranded DNAs. It interacts with LexA causing its activation and leading to its autocatalytic cleavage. The sequence is that of Protein RecA from Roseiflexus castenholzii (strain DSM 13941 / HLO8).